The following is a 159-amino-acid chain: Ribosomal RNA large subunit methyltransferase H (159 aa).

S-adenosyl-L-methionine contacts are provided by residues Leu76, Gly108, and 127–132 (FSKMTF).

It belongs to the RNA methyltransferase RlmH family. In terms of assembly, homodimer.

Its subcellular location is the cytoplasm. It carries out the reaction pseudouridine(1915) in 23S rRNA + S-adenosyl-L-methionine = N(3)-methylpseudouridine(1915) in 23S rRNA + S-adenosyl-L-homocysteine + H(+). In terms of biological role, specifically methylates the pseudouridine at position 1915 (m3Psi1915) in 23S rRNA. This Bacillus velezensis (strain DSM 23117 / BGSC 10A6 / LMG 26770 / FZB42) (Bacillus amyloliquefaciens subsp. plantarum) protein is Ribosomal RNA large subunit methyltransferase H.